Here is a 200-residue protein sequence, read N- to C-terminus: FMN-dependent NADH:quinone oxidoreductase 2 (200 aa).

Residue 135 to 138 (SRGG) participates in FMN binding.

It belongs to the azoreductase type 1 family. As to quaternary structure, homodimer. FMN serves as cofactor.

It carries out the reaction 2 a quinone + NADH + H(+) = 2 a 1,4-benzosemiquinone + NAD(+). The enzyme catalyses N,N-dimethyl-1,4-phenylenediamine + anthranilate + 2 NAD(+) = 2-(4-dimethylaminophenyl)diazenylbenzoate + 2 NADH + 2 H(+). Its function is as follows. Quinone reductase that provides resistance to thiol-specific stress caused by electrophilic quinones. Functionally, also exhibits azoreductase activity. Catalyzes the reductive cleavage of the azo bond in aromatic azo compounds to the corresponding amines. The chain is FMN-dependent NADH:quinone oxidoreductase 2 from Clostridium acetobutylicum (strain ATCC 824 / DSM 792 / JCM 1419 / IAM 19013 / LMG 5710 / NBRC 13948 / NRRL B-527 / VKM B-1787 / 2291 / W).